A 118-amino-acid polypeptide reads, in one-letter code: UPF0102 protein STH1475 (118 aa).

It belongs to the UPF0102 family.

This Symbiobacterium thermophilum (strain DSM 24528 / JCM 14929 / IAM 14863 / T) protein is UPF0102 protein STH1475.